The sequence spans 387 residues: Signal-regulatory protein gamma (387 aa).

Positions 1 to 28 (MPVPASWPHPPGPFLLLTLLLGLTEVAG) are cleaved as a signal peptide. The Ig-like V-type domain maps to 29-137 (EEELQMIQPE…ENVEFKSGPG (109 aa)). The Extracellular segment spans residues 29-360 (EEELQMIQPE…QKDQSSDATP (332 aa)). Disulfide bonds link Cys-53/Cys-119 and Cys-168/Cys-226. 2 Ig-like C1-type domains span residues 146-245 (PSAP…ANLS) and 252-340 (PTLE…LAVS). N-linked (GlcNAc...) asparagine glycosylation is found at Asn-243, Asn-268, Asn-309, and Asn-317. Cys-271 and Cys-329 are disulfide-bonded. Residues 361–383 (GPASSLTALLLIAVLLGPIYVPW) form a helical membrane-spanning segment. Residues 384–387 (KQKT) lie on the Cytoplasmic side of the membrane.

As to quaternary structure, interacts with CD47. In terms of tissue distribution, detected in liver, and at very low levels in brain, heart, lung, pancreas, kidney, placenta and skeletal muscle. Expressed on CD4+ T-cells, CD8+ T-cells, CD56-bright natural killer (NK) cells, CD20+ cells, and all activated NK cells. Mainly present in the paracortical T-cell area of lymph nodes, with only sparse positive cells in the mantle and in the germinal center of B-cell follicles. In the thymus, primarily expressed in the medulla on mature T-lymphocytes that have undergone thymic selection.

The protein localises to the membrane. Its function is as follows. Probable immunoglobulin-like cell surface receptor. On binding with CD47, mediates cell-cell adhesion. Engagement on T-cells by CD47 on antigen-presenting cells results in enhanced antigen-specific T-cell proliferation and costimulates T-cell activation. The protein is Signal-regulatory protein gamma (SIRPG) of Homo sapiens (Human).